The sequence spans 787 residues: Patatin-like phospholipase domain-containing protein OOU_Y34scaffold00095g16.3 (787 aa).

Disordered regions lie at residues 47-69 (APDT…ARSF) and 137-164 (KVVG…PGRR). Residues 59–69 (ASPRSPSARSF) show a composition bias toward low complexity. Basic residues predominate over residues 144 to 157 (HRQKKSSRRRKRSK). The helical transmembrane segment at 180–200 (WPFLLIVGAWIVGLAVTYLFT) threads the bilayer. Residues 375–566 (LCLSGGASFA…RTDIPIRALN (192 aa)) form the PNPLA domain. The GXSXG signature appears at 406–410 (GTSGG). Ser408 (nucleophile) is an active-site residue. Catalysis depends on Asp553, which acts as the Proton acceptor. Residues 745-787 (GTDEEITTNDEMEFASDEKAVLTEDEGQFDGVTDNTEGSPLLK) are disordered. Residues 746 to 759 (TDEEITTNDEMEFA) are compositionally biased toward acidic residues. Residues 777–787 (TDNTEGSPLLK) show a composition bias toward polar residues.

This sequence belongs to the PLPL family.

The protein localises to the membrane. In terms of biological role, probable lipid hydrolase. The polypeptide is Patatin-like phospholipase domain-containing protein OOU_Y34scaffold00095g16.3 (Pyricularia oryzae (strain Y34) (Rice blast fungus)).